We begin with the raw amino-acid sequence, 507 residues long: UDP-N-acetylhexosamine pyrophosphorylase-like protein 1 (507 aa).

The Substrate binding motif lies at 111-114 (LAGG). UTP-binding positions include 111–114 (LAGG), lysine 125, glutamine 199, and glycine 225. Residue asparagine 226 coordinates substrate. Aspartate 256 provides a ligand contact to UTP. The Substrate binding motif lies at 306–307 (EY). Lysine 380 serves as a coordination point for UTP. Lysine 410 is a binding site for substrate.

Belongs to the UDPGP type 1 family.

The protein is UDP-N-acetylhexosamine pyrophosphorylase-like protein 1 (Uap1l1) of Mus musculus (Mouse).